Consider the following 442-residue polypeptide: Plasmalemma vesicle-associated protein (442 aa).

Topologically, residues 1–27 (MGLAMEHGGSYARAGGSSRGCWYYLRY) are cytoplasmic. A helical; Signal-anchor for type II membrane protein transmembrane segment spans residues 28–48 (FFLFVSLIQFLIILGLVLFMV). Over 49 to 442 (YGNVHVSTES…AGIPVAPSSG (394 aa)) the chain is Extracellular. Residues 57–77 (ESNLQATERRAEGLYSQLLGL) adopt a coiled-coil conformation. Residues Asn-83, Asn-89, Asn-113, and Asn-151 are each glycosylated (N-linked (GlcNAc...) asparagine). 2 coiled-coil regions span residues 202 to 225 (KTRE…QALC) and 280 to 387 (SSKV…SALD). 2 disordered regions span residues 301-328 (NSDL…VEKE) and 394-418 (SQPM…PASL). Basic and acidic residues predominate over residues 319–328 (QEAKQKVEKE).

Homodimer. In terms of tissue distribution, expressed in lung, kidney, heart, aorta, placenta, muscle, pituitary gland, adrenals, mammary gland, bladder, lymph node, bone marrow, trachea, digestive tract, liver and tumor-associated endothelium.

It is found in the cell membrane. It localises to the membrane. The protein resides in the caveola. The protein localises to the cytoplasm. Its subcellular location is the perinuclear region. Its function is as follows. Endothelial cell-specific membrane protein involved in the formation of the diaphragms that bridge endothelial fenestrae. It is also required for the formation of stomata of caveolae and transendothelial channels. Functions in microvascular permeability, endothelial fenestrae contributing to the passage of water and solutes and regulating transcellular versus paracellular flow in different organs. Plays a specific role in embryonic development. The sequence is that of Plasmalemma vesicle-associated protein (PLVAP) from Homo sapiens (Human).